Here is a 373-residue protein sequence, read N- to C-terminus: Flagellar P-ring protein 1 (373 aa).

An N-terminal signal peptide occupies residues 1 to 25 (MKPINTFFSSFLLALTLGLPATSQA).

It belongs to the FlgI family. The basal body constitutes a major portion of the flagellar organelle and consists of four rings (L,P,S, and M) mounted on a central rod.

Its subcellular location is the periplasm. It is found in the bacterial flagellum basal body. Its function is as follows. Assembles around the rod to form the L-ring and probably protects the motor/basal body from shearing forces during rotation. The sequence is that of Flagellar P-ring protein 1 from Vibrio parahaemolyticus serotype O3:K6 (strain RIMD 2210633).